The sequence spans 472 residues: MTTQIYQVPVVSNGLRETESILQIVDSLEKLEKVFNDMYSTISARVSHEKSRIDNVANRLNNAQHKVNQIVGSKQAITVFSSAKYPADKKWGDYVPIYSGKHKLPFKPSHYHGLNSEDSPIKKRPEDSYLDVNDLVFIEKSIDTTSKEVEVKEGLGRIPAQIPSVSNLLLFNTQENPYKKYSNTLDNLSGGDGGEDDYTIFGDQLSKKKRLGDAPVTVKDGDSRIDAENVKIGYEPGTFEIPVYNFPSILPLPNVAENITWAAESQSIAPSQKATLNLLPTYDNSNSGSAPVNQSSGGDNNVNNNNNNNNSNNSTGIMQPPQPTNAPPPPPPPPQSANAPPPPPPPPVSAPPPFNPPSVNSNNDDDDDDDDDNGGGGGPGGAIGDLLADIRRGHKNRLKKADVGGDNGDGEDNKPPPVSDGGGGLMGDLFKKLALRRQSIATTKSTKKQSKSKKEDTDDQDGESDTDSSEWE.

A disordered region spans residues 279–472 (LPTYDNSNSG…ESDTDSSEWE (194 aa)). Residues 282-299 (YDNSNSGSAPVNQSSGGD) show a composition bias toward polar residues. Residues 300–314 (NNVNNNNNNNNSNNS) show a composition bias toward low complexity. Residues 320 to 356 (PPQPTNAPPPPPPPPQSANAPPPPPPPPVSAPPPFNP) show a composition bias toward pro residues. Acidic residues predominate over residues 363-373 (NDDDDDDDDDN). Residues 374-383 (GGGGGPGGAI) are compositionally biased toward gly residues. In terms of domain architecture, WH2 spans 382-401 (AIGDLLADIRRGHKNRLKKA). The span at 457-472 (TDDQDGESDTDSSEWE) shows a compositional bias: acidic residues.

Belongs to the WASH1 family.

Its function is as follows. Acts as a nucleation-promoting factor by activating the Arp2/3 complex to induce actin polymerization. The protein is WAS protein family homolog DDB_G0292878 of Dictyostelium discoideum (Social amoeba).